The primary structure comprises 212 residues: Small ribosomal subunit protein uS3 (212 aa).

A KH type-2 domain is found at 38-106; that stretch reads IRKFVKKTLY…EFAIEVNEIR (69 aa).

It belongs to the universal ribosomal protein uS3 family. As to quaternary structure, part of the 30S ribosomal subunit. Forms a tight complex with proteins S10 and S14.

In terms of biological role, binds the lower part of the 30S subunit head. Binds mRNA in the 70S ribosome, positioning it for translation. The polypeptide is Small ribosomal subunit protein uS3 (Nitratidesulfovibrio vulgaris (strain ATCC 29579 / DSM 644 / CCUG 34227 / NCIMB 8303 / VKM B-1760 / Hildenborough) (Desulfovibrio vulgaris)).